A 271-amino-acid chain; its full sequence is Collectin-11 (271 aa).

A signal peptide spans 1 to 25 (MVGEKLVAYMLVSVLGLALLRSVFG). Positions 44–103 (GEAGEKGEKGAPGRPGRVGPTGEQGPPGDKGQKGSPGRYGKMGPTGPKGLKGDMGDPGPK) constitute a Collagen-like domain. The disordered stretch occupies residues 46–112 (AGEKGEKGAP…KGPNGEPGVP (67 aa)). The stretch at 124-148 (EMDIQVVQLTNELKFIKNAVAGIKE) forms a coiled coil. In terms of domain architecture, C-type lectin spans 149-265 (TDSKVYLLVK…CQLTMYFVCE (117 aa)). Intrachain disulfides connect cysteine 170-cysteine 264 and cysteine 242-cysteine 256. Arginine 200 contributes to the a carbohydrate binding site. Ca(2+) contacts are provided by aspartate 207, glutamate 211, glutamate 232, asparagine 234, asparagine 235, aspartate 238, glutamate 240, and aspartate 241. Glutamate 240 contributes to the a carbohydrate binding site. A carbohydrate-binding positions include glutamate 244 and 252–254 (IDV). Aspartate 253 serves as a coordination point for Ca(2+).

It belongs to the COLEC10/COLEC11 family. As to quaternary structure, homotrimer; disulfide-linked. Interacts with MASP1; probably triggers the lectin pathway of complement.

It is found in the secreted. Functionally, lectin that plays a role in innate immunity, apoptosis and embryogenesis. Calcium-dependent lectin that binds self and non-self glycoproteins presenting high mannose oligosaccharides with at least one terminal alpha-1,2-linked mannose epitope. Primarily recognizes the terminal disaccharide of the glycan. Also recognizes a subset of fucosylated glycans and lipopolysaccharides. Plays a role in innate immunity through its ability to bind non-self sugars presented by microorganisms and to activate the complement through the recruitment of MAPS1. Also plays a role in apoptosis through its ability to bind in a calcium-independent manner the DNA present at the surface of apoptotic cells and to activate the complement in response to this binding. Finally, plays a role in development, probably serving as a guidance cue during the migration of neural crest cells and other cell types during embryogenesis. The polypeptide is Collectin-11 (colec11) (Danio rerio (Zebrafish)).